Here is a 264-residue protein sequence, read N- to C-terminus: MTSLFTAAILGIVEGLTEFLPVSSTGHLIITGHLLGFTGEKAASFEVAIQLGAILAVVVLYWSRFWGLLFPKPGQQFSGIRGLYLLFLTSLPASVLGLLAHDFIKQHLFNPYTVAWALGVGAIMILIVEKKETTPSCFTLDEVTPKLALGIGCFQCLALWPGFSRSAATIMGGMLLGAKRKIAAEYSFIAAVPIMFAATGYDMLKSYKLFTMADMPFLAVGFIVSFLSAWAAVKGFIYLLGKLTLRPFAYYRLALAPLVLFFWS.

Transmembrane regions (helical) follow at residues 15–37 (GLTE…LLGF), 42–62 (AASF…VLYW), 84–104 (YLLF…HDFI), 108–128 (LFNP…ILIV), 143–163 (VTPK…WPGF), 182–202 (IAAE…TGYD), 217–237 (FLAV…KGFI), and 243–263 (LTLR…LFFW).

The protein belongs to the UppP family.

Its subcellular location is the cell inner membrane. The catalysed reaction is di-trans,octa-cis-undecaprenyl diphosphate + H2O = di-trans,octa-cis-undecaprenyl phosphate + phosphate + H(+). In terms of biological role, catalyzes the dephosphorylation of undecaprenyl diphosphate (UPP). Confers resistance to bacitracin. The chain is Undecaprenyl-diphosphatase from Maridesulfovibrio salexigens (strain ATCC 14822 / DSM 2638 / NCIMB 8403 / VKM B-1763) (Desulfovibrio salexigens).